The sequence spans 412 residues: MGNCFGFSAKVGNRESPYRGSSRISAKRSQSSRLSSLTIQSSSYNDDTSVASLQTPRSEGELLASPTLKAFTFNELKTATRNFRPDSVIGEGGFGYVYKGWIDERTLSPSKPGSGMVVAVKKLKEEGFQGHRQWLAEVDCLGRLHHMNLVKLIGYCSKGDHIRLLVYEYMPKGSLENHLFRRGAEPIPWRTRIKVAIGAARGLAFLHEAQVIYRDFKASNILLDSEFNAKLSDFGLAKVGPTGDRTHVSTQVMGTQGYAAPEYVATGRITAKSDVYSFGVVLLELLSGRLTVDKTKVGVERNLVDWAIPYLGDKRKVFRIMDTKLGGQYPHKGACLTANTALQCLNQEPKLRPKMSDVLSTLEELEMTLKSGSISNSVMKLTSSSSSFTAKQRVRTPVADPVLSSRRCRRVR.

The N-myristoyl glycine moiety is linked to residue glycine 2. Residue cysteine 4 is the site of S-palmitoyl cysteine attachment. A disordered region spans residues arginine 14–glutamine 40. Low complexity predominate over residues serine 21 to glutamine 40. Threonine 72 carries the phosphothreonine modification. The 287-residue stretch at phenylalanine 83–leucine 369 folds into the Protein kinase domain. Residues isoleucine 89 to valine 97 and lysine 121 each bind ATP. Tyrosine 167 carries the phosphotyrosine modification. The active-site Proton acceptor is the aspartate 215. 2 positions are modified to phosphoserine: serine 219 and serine 249. Phosphothreonine is present on residues threonine 250 and threonine 255. The residue at position 263 (tyrosine 263) is a Phosphotyrosine.

Belongs to the protein kinase superfamily. Ser/Thr protein kinase family.

The protein resides in the cell membrane. It carries out the reaction L-seryl-[protein] + ATP = O-phospho-L-seryl-[protein] + ADP + H(+). The catalysed reaction is L-threonyl-[protein] + ATP = O-phospho-L-threonyl-[protein] + ADP + H(+). Its function is as follows. May be involved in plant defense signaling. The sequence is that of Probable serine/threonine-protein kinase PBL4 from Arabidopsis thaliana (Mouse-ear cress).